A 108-amino-acid polypeptide reads, in one-letter code: Thiosulfate sulfurtransferase GlpE (108 aa).

Residues 18–106 (QNEDAVLVDI…WVRSELPIEL (89 aa)) form the Rhodanese domain. Cys-66 acts as the Cysteine persulfide intermediate in catalysis.

The protein belongs to the GlpE family.

The protein resides in the cytoplasm. The enzyme catalyses thiosulfate + hydrogen cyanide = thiocyanate + sulfite + 2 H(+). It carries out the reaction thiosulfate + [thioredoxin]-dithiol = [thioredoxin]-disulfide + hydrogen sulfide + sulfite + 2 H(+). In terms of biological role, transferase that catalyzes the transfer of sulfur from thiosulfate to thiophilic acceptors such as cyanide or dithiols. May function in a CysM-independent thiosulfate assimilation pathway by catalyzing the conversion of thiosulfate to sulfite, which can then be used for L-cysteine biosynthesis. This chain is Thiosulfate sulfurtransferase GlpE, found in Glaesserella parasuis serovar 5 (strain SH0165) (Haemophilus parasuis).